The primary structure comprises 254 residues: Cobalt transport protein CbiM (254 aa).

The first 31 residues, 1–31, serve as a signal peptide directing secretion; that stretch reads MKTILRPFTLLSRSIFLALFVLFLWSPDAHA. The next 6 membrane-spanning stretches (helical) occupy residues 37–57, 74–94, 106–126, 128–148, 169–189, and 212–232; these read GFLP…FLVV, LLLA…IPSV, LGAV…VLLF, ALLL…SMAI, WLAV…VTSL, and IFAL…VMVF.

This sequence belongs to the CbiM family. As to quaternary structure, forms an energy-coupling factor (ECF) transporter complex composed of an ATP-binding protein (A component, CbiO), a transmembrane protein (T component, CbiQ) and 2 possible substrate-capture proteins (S components, CbiM and CbiN) of unknown stoichimetry.

It localises to the cell inner membrane. It functions in the pathway cofactor biosynthesis; adenosylcobalamin biosynthesis. In terms of biological role, part of the energy-coupling factor (ECF) transporter complex CbiMNOQ involved in cobalt import. This chain is Cobalt transport protein CbiM, found in Chlorobium limicola (strain DSM 245 / NBRC 103803 / 6330).